The chain runs to 680 residues: Zinc finger protein 263 (680 aa).

Lys19 participates in a covalent cross-link: Glycyl lysine isopeptide (Lys-Gly) (interchain with G-Cter in SUMO2). One can recognise an SCAN box domain in the interval 43 to 125 (HLRFRRFRFQ…TLVERMQKEL (83 aa)). The tract at residues 147 to 191 (LPLETAGESPSFKLEPMETERSPGPRLQELLDPSPQRDSQAVKER) is disordered. Residue Lys159 forms a Glycyl lysine isopeptide (Lys-Gly) (interchain with G-Cter in SUMO2) linkage. Phosphoserine occurs at positions 168 and 180. Glycyl lysine isopeptide (Lys-Gly) (interchain with G-Cter in SUMO2) cross-links involve residues Lys286, Lys300, and Lys376. 5 C2H2-type zinc fingers span residues 378-400 (HLCA…QRIH), 434-456 (HKCL…QRTH), 462-484 (FQCN…QRTH), 490-512 (YKCP…QRIH), and 518-540 (YRCS…ERTH). Residues Lys570 and Lys579 each participate in a glycyl lysine isopeptide (Lys-Gly) (interchain with G-Cter in SUMO2) cross-link. C2H2-type zinc fingers lie at residues 572–594 (FECS…QRTH), 600–622 (YKCI…QRIH), 628–650 (YTCH…LRTH), and 656–678 (YKCS…QRTH).

Belongs to the krueppel C2H2-type zinc-finger protein family. In terms of assembly, interacts with a number of proteins involved in chromatin modification and transcriptional corepression including DNMT1, DNMT3A, HDAC2, PHF8, TRIM28/KAP1, SETDB1, EZH2, UHRF1, CBX3/HP1-gamma, and CBX5/HP1-alpha; recruits these proteins to the SIX3 promoter region, leading to SIX3 transcriptional repression. Interacts with MAPK3/ERK1 and MAPK1/ERK2. In terms of processing, ubiquitinated, leading to proteasomal degradation. Expressed in Purkinje cells in the brain (at protein level).

Its subcellular location is the nucleus. Its function is as follows. Transcription factor that binds to the consensus sequence 5'-TCCTCCC-3' and acts as a transcriptional repressor. Binds to the promoter region of SIX3 and recruits other proteins involved in chromatin modification and transcriptional corepression, resulting in methylation of the promoter and transcriptional repression. Acts as a transcriptional repressor of HS3ST1 and HS3ST3A1 via binding to gene promoter regions. This chain is Zinc finger protein 263, found in Mus musculus (Mouse).